We begin with the raw amino-acid sequence, 178 residues long: Small ribosomal subunit protein bS16 (178 aa).

Positions 78 to 178 are disordered; that stretch reads KLGITQWTAG…AAPAEGEEQA (101 aa). Residues 91–113 show a composition bias toward basic and acidic residues; sequence KKGEPGQKAKERAEERAQREADR. Low complexity predominate over residues 114–127; it reads AAAAAEAAAAPAEE. Residues 128-139 show a composition bias toward acidic residues; that stretch reads APAEEAPAEEAA. Residues 140 to 172 are compositionally biased toward low complexity; that stretch reads AEAAPEAAAAEEAPAAEAAAEEAAPAAEEAAPA.

This sequence belongs to the bacterial ribosomal protein bS16 family.

The chain is Small ribosomal subunit protein bS16 from Phenylobacterium zucineum (strain HLK1).